We begin with the raw amino-acid sequence, 145 residues long: Androgenic gland hormone (145 aa).

Positions 1–21 are cleaved as a signal peptide; the sequence is MKGLLFIVSLLCLTLHQRVWA. Cystine bridges form between cysteine 33-cysteine 122, cysteine 42-cysteine 59, cysteine 44-cysteine 140, and cysteine 123-cysteine 131. Residues 68 to 112 constitute a propeptide, c peptide; that stretch reads SADDEDYLFEEDEDDEFFHPRALSPPAAKSGDERLEDEVSFHSRS. A glycan (N-linked (GlcNAc...) asparagine) is linked at asparagine 132.

In terms of tissue distribution, androgenic gland.

It is found in the secreted. Controls sex differentiation and the formation of male appendages, spermatogenesis, pigmentation, and male specific behavior. In Porcellio scaber (Common rough woodlouse), this protein is Androgenic gland hormone (AGH).